Reading from the N-terminus, the 614-residue chain is Translation initiation factor IF-2 (614 aa).

The tr-type G domain occupies Ala-115 to Tyr-283. The tract at residues Gly-124–Thr-131 is G1. Gly-124–Thr-131 contributes to the GTP binding site. Residues Gly-149–His-153 form a G2 region. The G3 stretch occupies residues Asp-170–Gly-173. Residues Asp-170–His-174 and Asn-224–Asp-227 each bind GTP. The interval Asn-224–Asp-227 is G4. The interval Ser-260–Leu-262 is G5.

This sequence belongs to the TRAFAC class translation factor GTPase superfamily. Classic translation factor GTPase family. IF-2 subfamily.

It is found in the cytoplasm. In terms of biological role, one of the essential components for the initiation of protein synthesis. Protects formylmethionyl-tRNA from spontaneous hydrolysis and promotes its binding to the 30S ribosomal subunits. Also involved in the hydrolysis of GTP during the formation of the 70S ribosomal complex. The chain is Translation initiation factor IF-2 from Ureaplasma parvum serovar 3 (strain ATCC 27815 / 27 / NCTC 11736).